The primary structure comprises 137 residues: Nucleoside diphosphate kinase (137 aa).

Positions 10, 59, 87, 93, 104, and 114 each coordinate ATP. The active-site Pros-phosphohistidine intermediate is H117.

Belongs to the NDK family. As to quaternary structure, homotetramer. Mg(2+) serves as cofactor.

It localises to the cytoplasm. The enzyme catalyses a 2'-deoxyribonucleoside 5'-diphosphate + ATP = a 2'-deoxyribonucleoside 5'-triphosphate + ADP. The catalysed reaction is a ribonucleoside 5'-diphosphate + ATP = a ribonucleoside 5'-triphosphate + ADP. Functionally, major role in the synthesis of nucleoside triphosphates other than ATP. The ATP gamma phosphate is transferred to the NDP beta phosphate via a ping-pong mechanism, using a phosphorylated active-site intermediate. The chain is Nucleoside diphosphate kinase from Streptomyces griseus subsp. griseus (strain JCM 4626 / CBS 651.72 / NBRC 13350 / KCC S-0626 / ISP 5235).